A 202-amino-acid chain; its full sequence is MSTETRVNERIRVPEVRLIGPGGEQVGIVRIEDALRVAADADLDLVEVAPNARPPVCKIMDYGKYKYEVAQKARESRRNQQQTVVKEQKLRPKIDDHDYETKKSHVVRFLEAGSKVKVTIMFRGREQSRPELGYRLLQRLGADVADYGFVETSAKQDGRNMTMVLAPHRGAKTRASARHPEVPGAGSVQDIDATGDTDGSPH.

The segment at Lys-172–His-202 is disordered.

This sequence belongs to the IF-3 family. Monomer.

It is found in the cytoplasm. IF-3 binds to the 30S ribosomal subunit and shifts the equilibrium between 70S ribosomes and their 50S and 30S subunits in favor of the free subunits, thus enhancing the availability of 30S subunits on which protein synthesis initiation begins. The polypeptide is Translation initiation factor IF-3 (Mycobacterium leprae (strain TN)).